Here is a 303-residue protein sequence, read N- to C-terminus: Counting factor 50 (303 aa).

The N-terminal stretch at 1-24 (MNKMNNIFLIISSIILSIVIFVSG) is a signal peptide. Residues 28–240 (IDFSSEISVG…CSTSSGSASG (213 aa)) form the Ch-type lysozyme domain. Asn67 is a glycosylation site (N-linked (GlcNAc...) asparagine). Glu125 is a catalytic residue. Residue Asn170 is glycosylated (N-linked (GlcNAc...) asparagine). Residues 226–303 (GSGSGCSTSS…GSGTGSGSSI (78 aa)) form an S-G-S motif repeats region. Residues 236 to 292 (GSASGSASGSASGSASGSNSGSSNSGSSNSGSSNSGSNSGSSNSGSGNSGSSNSGSA) show a composition bias toward low complexity. A disordered region spans residues 236 to 303 (GSASGSASGS…GSGTGSGSSI (68 aa)). Residues 293–303 (SGSGTGSGSSI) are compositionally biased toward gly residues.

This sequence belongs to the glycosyl hydrolase 25 family. Monomer. Component of the counting factor (CF) complex, which includes cf60, cf50, cf45-1 and ctnA.

It localises to the secreted. It catalyses the reaction Hydrolysis of (1-&gt;4)-beta-linkages between N-acetylmuramic acid and N-acetyl-D-glucosamine residues in a peptidoglycan and between N-acetyl-D-glucosamine residues in chitodextrins.. Cell-counting factor that limits the maximum size of the multicellular structure during aggregation. Has a very low lysozyme activity. The protein is Counting factor 50 (cf50-1) of Dictyostelium discoideum (Social amoeba).